A 253-amino-acid chain; its full sequence is Ribonuclease PH (253 aa).

Phosphate is bound by residues Arg-86 and 124-126; that span reads GTR.

It belongs to the RNase PH family. In terms of assembly, homohexameric ring arranged as a trimer of dimers.

It catalyses the reaction tRNA(n+1) + phosphate = tRNA(n) + a ribonucleoside 5'-diphosphate. Functionally, phosphorolytic 3'-5' exoribonuclease that plays an important role in tRNA 3'-end maturation. Removes nucleotide residues following the 3'-CCA terminus of tRNAs; can also add nucleotides to the ends of RNA molecules by using nucleoside diphosphates as substrates, but this may not be physiologically important. Probably plays a role in initiation of 16S rRNA degradation (leading to ribosome degradation) during starvation. This chain is Ribonuclease PH, found in Brevibacillus brevis (strain 47 / JCM 6285 / NBRC 100599).